Reading from the N-terminus, the 365-residue chain is MNAKEFLIELLKFKSVTPNDDGALNFIAMELSDFEAFFIEKEGIKNLLLTKKFKDEGEHLAFGGHVDVVPAGEGWSNNAFAPVEKEGFIYARGAQDMKSGVAAFVDAVKNADFKGARLSLILTSDEEGEAIYGTKAVLEWMQERDMLPDYAVVAEPTCVKKIGDSIKIGRRGSINGKLLIRGKQGHVAYPEKCINPVHDFAPVLKLLAGFDLDPGSAEFSPSKIVITDIRGGMEVCNVTPNDLKLMFNVRNSPDTSLEDVKSYVEKICHGLNYELELKQSSEAFLTNIDNKIVQKMNESVQKITHEVPELNTKGGTSDARYFAKYGVKVVEFGVCNDRIHAIDERVSIEEFEKLCLVFKDLIENF.

Position 65 (H65) interacts with Zn(2+). D67 is a catalytic residue. D96 provides a ligand contact to Zn(2+). E126 serves as the catalytic Proton acceptor. Positions 127, 155, and 340 each coordinate Zn(2+).

The protein belongs to the peptidase M20A family. DapE subfamily. As to quaternary structure, homodimer. Requires Zn(2+) as cofactor. Co(2+) serves as cofactor.

It carries out the reaction N-succinyl-(2S,6S)-2,6-diaminopimelate + H2O = (2S,6S)-2,6-diaminopimelate + succinate. The protein operates within amino-acid biosynthesis; L-lysine biosynthesis via DAP pathway; LL-2,6-diaminopimelate from (S)-tetrahydrodipicolinate (succinylase route): step 3/3. Catalyzes the hydrolysis of N-succinyl-L,L-diaminopimelic acid (SDAP), forming succinate and LL-2,6-diaminopimelate (DAP), an intermediate involved in the bacterial biosynthesis of lysine and meso-diaminopimelic acid, an essential component of bacterial cell walls. This Campylobacter jejuni subsp. jejuni serotype O:23/36 (strain 81-176) protein is Succinyl-diaminopimelate desuccinylase.